A 158-amino-acid chain; its full sequence is Transcription factor BTF3 homolog 4 (158 aa).

Lys-5 carries the post-translational modification N6-methyllysine. The 66-residue stretch at 33–98 folds into the NAC-A/B domain; the sequence is TADDKKLQSS…AEAKPITEML (66 aa). Thr-111 carries the post-translational modification Phosphothreonine. The disordered stretch occupies residues 123 to 158; sequence QVLDSKTPKPEDIDEEEDDVPDLVENFDEASKNEAN. The span at 134–150 shows a compositional bias: acidic residues; that stretch reads DIDEEEDDVPDLVENFD.

It belongs to the NAC-beta family.

The chain is Transcription factor BTF3 homolog 4 (BTF3L4) from Bos taurus (Bovine).